The following is a 125-amino-acid chain: Small ribosomal subunit protein uS12 (125 aa).

Asp-89 is subject to 3-methylthioaspartic acid.

The protein belongs to the universal ribosomal protein uS12 family. Part of the 30S ribosomal subunit. Contacts proteins S8 and S17. May interact with IF1 in the 30S initiation complex.

Functionally, with S4 and S5 plays an important role in translational accuracy. Its function is as follows. Interacts with and stabilizes bases of the 16S rRNA that are involved in tRNA selection in the A site and with the mRNA backbone. Located at the interface of the 30S and 50S subunits, it traverses the body of the 30S subunit contacting proteins on the other side and probably holding the rRNA structure together. The combined cluster of proteins S8, S12 and S17 appears to hold together the shoulder and platform of the 30S subunit. This chain is Small ribosomal subunit protein uS12, found in Ralstonia nicotianae (strain ATCC BAA-1114 / GMI1000) (Ralstonia solanacearum).